The chain runs to 423 residues: Histidine--tRNA ligase (423 aa).

Belongs to the class-II aminoacyl-tRNA synthetase family. Homodimer.

It localises to the cytoplasm. It catalyses the reaction tRNA(His) + L-histidine + ATP = L-histidyl-tRNA(His) + AMP + diphosphate + H(+). This chain is Histidine--tRNA ligase, found in Desulfosudis oleivorans (strain DSM 6200 / JCM 39069 / Hxd3) (Desulfococcus oleovorans).